The following is a 370-amino-acid chain: Aminomethyltransferase (370 aa).

Belongs to the GcvT family. As to quaternary structure, the glycine cleavage system is composed of four proteins: P, T, L and H.

The enzyme catalyses N(6)-[(R)-S(8)-aminomethyldihydrolipoyl]-L-lysyl-[protein] + (6S)-5,6,7,8-tetrahydrofolate = N(6)-[(R)-dihydrolipoyl]-L-lysyl-[protein] + (6R)-5,10-methylene-5,6,7,8-tetrahydrofolate + NH4(+). Its function is as follows. The glycine cleavage system catalyzes the degradation of glycine. In Clostridium botulinum (strain Loch Maree / Type A3), this protein is Aminomethyltransferase.